Consider the following 236-residue polypeptide: Uridylate kinase (236 aa).

K11–G14 is a binding site for ATP. G53 provides a ligand contact to UMP. G54 and R58 together coordinate ATP. Residues D73 and T134–T141 each bind UMP. Positions 161, 167, and 170 each coordinate ATP.

Belongs to the UMP kinase family. In terms of assembly, homohexamer.

It localises to the cytoplasm. The enzyme catalyses UMP + ATP = UDP + ADP. The protein operates within pyrimidine metabolism; CTP biosynthesis via de novo pathway; UDP from UMP (UMPK route): step 1/1. Its activity is regulated as follows. Inhibited by UTP. In terms of biological role, catalyzes the reversible phosphorylation of UMP to UDP. This Hydrogenovibrio crunogenus (strain DSM 25203 / XCL-2) (Thiomicrospira crunogena) protein is Uridylate kinase.